Reading from the N-terminus, the 109-residue chain is Phycoerythrin alpha-1 subunit (109 aa).

Residues Val6, Ala16, Phe17, Pro20, Asp27, Ala28, and Ala39 each contribute to the (2R,3E)-phycocyanobilin site.

It belongs to the phycoerythrin family. In terms of assembly, heterotetramer of 2 identical alpha chains and 2 identical beta chains which form 2 alpha-beta heterodimers within the heterotetramer. The two alpha-beta heterodimers are rotated to an open configuration in contrast to the closed configuration found in other cryptophyte species due to the insertion of a single amino acid, Asp-65, in a conserved region of the alpha chain. In the open form, the central chromophores are not in physical contact but are separated by a water-filled channel. Contains three phycocyanobilin chromophores with binding mediated by both the alpha and beta subunits.

Its subcellular location is the plastid. It localises to the chloroplast thylakoid membrane. Its function is as follows. Light-harvesting photosynthetic tetrapyrrole chromophore-protein from the phycobiliprotein complex. The sequence is that of Phycoerythrin alpha-1 subunit from Hemiselmis virescens.